Consider the following 420-residue polypeptide: Peroxisomal biogenesis factor 3 (420 aa).

Residues 1–16 (MPIFSSLNSFLRRHKK) lie on the Peroxisomal side of the membrane. Residues 17-37 (KLIVTATLTFSAYFLVNQFII) traverse the membrane as a helical segment. Over 38 to 420 (KKLKNFQNSL…FSASIYSNFE (383 aa)) the chain is Cytoplasmic.

It belongs to the peroxin-3 family.

It localises to the peroxisome membrane. Involved in peroxisome biosynthesis. This Debaryomyces hansenii (strain ATCC 36239 / CBS 767 / BCRC 21394 / JCM 1990 / NBRC 0083 / IGC 2968) (Yeast) protein is Peroxisomal biogenesis factor 3 (PEX3).